A 176-amino-acid chain; its full sequence is dCTP deaminase (176 aa).

DCTP-binding positions include 99 to 104 (RSTLAR) and Asp-115. The active-site Proton donor/acceptor is Glu-125. Gln-163 contributes to the dCTP binding site.

It belongs to the dCTP deaminase family. Homotrimer.

It catalyses the reaction dCTP + H2O + H(+) = dUTP + NH4(+). The protein operates within pyrimidine metabolism; dUMP biosynthesis; dUMP from dCTP (dUTP route): step 1/2. Functionally, catalyzes the deamination of dCTP to dUTP. This Pyrobaculum aerophilum (strain ATCC 51768 / DSM 7523 / JCM 9630 / CIP 104966 / NBRC 100827 / IM2) protein is dCTP deaminase.